Here is a 312-residue protein sequence, read N- to C-terminus: Ribosomal RNA small subunit methyltransferase H (312 aa).

Residues 35–37 (GGH), aspartate 55, phenylalanine 79, aspartate 100, and glutamine 107 contribute to the S-adenosyl-L-methionine site. A disordered region spans residues 279-312 (LVGKSQRPGPGEVAANPRSRSAVMRVAERTGGAA).

Belongs to the methyltransferase superfamily. RsmH family.

The protein localises to the cytoplasm. The catalysed reaction is cytidine(1402) in 16S rRNA + S-adenosyl-L-methionine = N(4)-methylcytidine(1402) in 16S rRNA + S-adenosyl-L-homocysteine + H(+). Its function is as follows. Specifically methylates the N4 position of cytidine in position 1402 (C1402) of 16S rRNA. This Aromatoleum aromaticum (strain DSM 19018 / LMG 30748 / EbN1) (Azoarcus sp. (strain EbN1)) protein is Ribosomal RNA small subunit methyltransferase H.